The sequence spans 247 residues: Flagellar brake protein YcgR 2 (247 aa).

Residues Gln-124–Ala-237 form the PilZ domain.

Belongs to the YcgR family. In terms of assembly, monomer. Interacts with the flagellar basal bodies.

The protein resides in the bacterial flagellum basal body. Its function is as follows. Acts as a flagellar brake, regulating swimming and swarming in a bis-(3'-5') cyclic diguanylic acid (c-di-GMP)-dependent manner. Binds 1 c-di-GMP dimer per subunit. Increasing levels of c-di-GMP lead to decreased motility. The polypeptide is Flagellar brake protein YcgR 2 (Dechloromonas aromatica (strain RCB)).